Reading from the N-terminus, the 240-residue chain is uncharacterized protein (240 aa).

A signal peptide spans methionine 1 to alanine 17.

This is an uncharacterized protein from Treponema pallidum (strain Nichols).